The sequence spans 167 residues: Transcription antitermination protein NusB (167 aa).

A disordered region spans residues 1–21 (MIPTDTAPPSKPAQGHKGYKN).

It belongs to the NusB family.

Its function is as follows. Involved in transcription antitermination. Required for transcription of ribosomal RNA (rRNA) genes. Binds specifically to the boxA antiterminator sequence of the ribosomal RNA (rrn) operons. The chain is Transcription antitermination protein NusB from Nitrosomonas eutropha (strain DSM 101675 / C91 / Nm57).